A 404-amino-acid polypeptide reads, in one-letter code: XK-related protein 8 (404 aa).

8 consecutive transmembrane segments (helical) span residues 14-34, 44-64, 169-189, 209-229, 232-252, 262-282, 293-313, and 324-344; these read FVFS…DVWL, VTWF…VQTF, AVQF…VVDY, LIYF…LALC, VLSG…ALWA, SVAG…FSWF, SAIY…TWWC, and ALAL…FKAL.

This sequence belongs to the XK family.

Its subcellular location is the cell membrane. It catalyses the reaction a 1,2-diacyl-sn-glycero-3-phospho-L-serine(in) = a 1,2-diacyl-sn-glycero-3-phospho-L-serine(out). Its function is as follows. Phospholipid scramblase that promotes phosphatidylserine exposure on apoptotic cell surface, possibly by mediating phospholipid scrambling. Phosphatidylserine is a specific marker only present at the surface of apoptotic cells and acts as a specific signal for engulfment. This chain is XK-related protein 8, found in Gasterosteus aculeatus (Three-spined stickleback).